Consider the following 116-residue polypeptide: NADH-ubiquinone oxidoreductase chain 3 (116 aa).

A run of 3 helical transmembrane segments spans residues 3 to 23 (LIMTILTITVALSLILATVSF), 56 to 76 (FFLVAILFLLFDLEIALLLPL), and 87 to 107 (GTFFWATTVLILLTLGLIYEW).

This sequence belongs to the complex I subunit 3 family.

Its subcellular location is the mitochondrion membrane. It catalyses the reaction a ubiquinone + NADH + 5 H(+)(in) = a ubiquinol + NAD(+) + 4 H(+)(out). Its function is as follows. Core subunit of the mitochondrial membrane respiratory chain NADH dehydrogenase (Complex I) that is believed to belong to the minimal assembly required for catalysis. Complex I functions in the transfer of electrons from NADH to the respiratory chain. The immediate electron acceptor for the enzyme is believed to be ubiquinone. The sequence is that of NADH-ubiquinone oxidoreductase chain 3 (MT-ND3) from Cyprinus carpio (Common carp).